The sequence spans 155 residues: SsrA-binding protein (155 aa).

A disordered region spans residues 132 to 155 (DKREDLKQKQMKRDVDRAIKDHMR).

Belongs to the SmpB family.

It localises to the cytoplasm. Its function is as follows. Required for rescue of stalled ribosomes mediated by trans-translation. Binds to transfer-messenger RNA (tmRNA), required for stable association of tmRNA with ribosomes. tmRNA and SmpB together mimic tRNA shape, replacing the anticodon stem-loop with SmpB. tmRNA is encoded by the ssrA gene; the 2 termini fold to resemble tRNA(Ala) and it encodes a 'tag peptide', a short internal open reading frame. During trans-translation Ala-aminoacylated tmRNA acts like a tRNA, entering the A-site of stalled ribosomes, displacing the stalled mRNA. The ribosome then switches to translate the ORF on the tmRNA; the nascent peptide is terminated with the 'tag peptide' encoded by the tmRNA and targeted for degradation. The ribosome is freed to recommence translation, which seems to be the essential function of trans-translation. The sequence is that of SsrA-binding protein from Oceanobacillus iheyensis (strain DSM 14371 / CIP 107618 / JCM 11309 / KCTC 3954 / HTE831).